We begin with the raw amino-acid sequence, 119 residues long: UPF0102 protein GFO_3098 (119 aa).

It belongs to the UPF0102 family.

The protein is UPF0102 protein GFO_3098 of Christiangramia forsetii (strain DSM 17595 / CGMCC 1.15422 / KT0803) (Gramella forsetii).